The chain runs to 214 residues: Adenylate kinase (214 aa).

ATP is bound at residue 10–15 (GAGKGT). The interval 30 to 59 (STGDMFRDHKARGTELGKTVQAIMDAGGLV) is NMP. Residues T31, R36, 57–59 (GLV), 85–88 (GYPR), and Q92 contribute to the AMP site. The tract at residues 126 to 163 (GRRSCPKCGAVYHVSANPPRRMGYCDRDDAGLVQRDDD) is LID. ATP is bound at residue R127. Positions 130 and 133 each coordinate Zn(2+). Position 136 to 137 (136 to 137 (VY)) interacts with ATP. The Zn(2+) site is built by C150 and D153. The AMP site is built by R160 and R171. G199 contributes to the ATP binding site.

The protein belongs to the adenylate kinase family. As to quaternary structure, monomer.

The protein localises to the cytoplasm. It carries out the reaction AMP + ATP = 2 ADP. It participates in purine metabolism; AMP biosynthesis via salvage pathway; AMP from ADP: step 1/1. Catalyzes the reversible transfer of the terminal phosphate group between ATP and AMP. Plays an important role in cellular energy homeostasis and in adenine nucleotide metabolism. This is Adenylate kinase from Anaeromyxobacter sp. (strain Fw109-5).